Here is a 381-residue protein sequence, read N- to C-terminus: Carboxylesterase 5A (381 aa).

Ser108 serves as the catalytic Acyl-ester intermediate. Cys162 and Cys173 are oxidised to a cystine. Asn163 carries an N-linked (GlcNAc...) asparagine glycan. The Charge relay system role is filled by Glu227. Residue Asn245 is glycosylated (N-linked (GlcNAc...) asparagine). The Charge relay system role is filled by His336.

It belongs to the type-B carboxylesterase/lipase family. Component of a epididymal complex at least composed of soluble form of prion protein PRNP, CLU, BPI, CES5A, MANBA and GLB1. N-glycosylated. In terms of tissue distribution, detected in corpus and cauda epididymal fluid. Present in seminal fluid but not found to be associated with sperm (at protein level). Not expressed in other tissues.

Its subcellular location is the secreted. The catalysed reaction is a carboxylic ester + H2O = an alcohol + a carboxylate + H(+). In terms of biological role, involved in the detoxification of xenobiotics and in the activation of ester and amide prodrugs. The polypeptide is Carboxylesterase 5A (CES5A) (Ovis aries (Sheep)).